Here is a 505-residue protein sequence, read N- to C-terminus: Deoxyguanosinetriphosphate triphosphohydrolase (505 aa).

Residues 66–273 enclose the HD domain; sequence RLTHSMEVQQ…MEAADDISYC (208 aa).

The protein belongs to the dGTPase family. Type 1 subfamily. In terms of assembly, homotetramer. Requires Mg(2+) as cofactor.

The enzyme catalyses dGTP + H2O = 2'-deoxyguanosine + triphosphate + H(+). DGTPase preferentially hydrolyzes dGTP over the other canonical NTPs. The protein is Deoxyguanosinetriphosphate triphosphohydrolase of Serratia proteamaculans (strain 568).